Reading from the N-terminus, the 357-residue chain is Arginine kinase (357 aa).

Ala2 carries the N-acetylalanine modification. Residues Lys9–Lys91 enclose the Phosphagen kinase N-terminal domain. Residue Gly64–Tyr68 participates in L-arginine binding. The 238-residue stretch at Phe119–Met356 folds into the Phosphagen kinase C-terminal domain. Residues Ser122–Arg126 and His185 contribute to the ATP site. Residue Glu225 coordinates L-arginine. Residue Arg229 participates in ATP binding. L-arginine is bound at residue Cys271. Residues Arg280–His284 and Arg309–Glu314 each bind ATP. Glu314 contacts L-arginine.

It belongs to the ATP:guanido phosphotransferase family.

The enzyme catalyses L-arginine + ATP = N(omega)-phospho-L-arginine + ADP + H(+). The protein is Arginine kinase of Pachygrapsus marmoratus (Marbled rock crab).